The chain runs to 100 residues: Large ribosomal subunit protein uL23 (100 aa).

This sequence belongs to the universal ribosomal protein uL23 family. In terms of assembly, part of the 50S ribosomal subunit. Contacts protein L29, and trigger factor when it is bound to the ribosome.

In terms of biological role, one of the early assembly proteins it binds 23S rRNA. One of the proteins that surrounds the polypeptide exit tunnel on the outside of the ribosome. Forms the main docking site for trigger factor binding to the ribosome. The polypeptide is Large ribosomal subunit protein uL23 (Aeromonas salmonicida (strain A449)).